Here is a 225-residue protein sequence, read N- to C-terminus: Two-component response regulator ARR8 (225 aa).

The Response regulatory domain maps to 10–145 (HVLAVDDSLF…DLTKLKPHMM (136 aa)). Asp-78 is modified (4-aspartylphosphate).

This sequence belongs to the ARR family. Type-A subfamily. Two-component system major event consists of a His-to-Asp phosphorelay between a sensor histidine kinase (HK) and a response regulator (RR). In plants, the His-to-Asp phosphorelay involves an additional intermediate named Histidine-containing phosphotransfer protein (HPt). This multistep phosphorelay consists of a His-Asp-His-Asp sequential transfer of a phosphate group between first a His and an Asp of the HK protein, followed by the transfer to a conserved His of the HPt protein and finally the transfer to an Asp in the receiver domain of the RR protein. As to expression, predominantly expressed in roots.

Its subcellular location is the nucleus. In terms of biological role, functions as a response regulator involved in His-to-Asp phosphorelay signal transduction system. Phosphorylation of the Asp residue in the receiver domain activates the ability of the protein to promote the transcription of target genes. Type-A response regulators seem to act as negative regulators of the cytokinin signaling. In Arabidopsis thaliana (Mouse-ear cress), this protein is Two-component response regulator ARR8 (ARR8).